The primary structure comprises 70 residues: Putative antitoxin VapB34 (70 aa).

Its function is as follows. Antitoxin component of a possible type II toxin-antitoxin (TA) system. The cognate toxin is VapC34. The chain is Putative antitoxin VapB34 (vapB34) from Mycobacterium tuberculosis (strain CDC 1551 / Oshkosh).